A 315-amino-acid polypeptide reads, in one-letter code: Olfactory receptor 8J2 (315 aa).

Residues 1 to 24 (MASGNLTWVTEFILVGVSDDPELQ) are Extracellular-facing. The N-linked (GlcNAc...) asparagine glycan is linked to asparagine 5. Residues 25–45 (IPLFLVFLVLYLLTVAGNLGI) form a helical membrane-spanning segment. Topologically, residues 46–57 (ITLTSVDPQLQT) are cytoplasmic. Residues 58–78 (PMYFFLRHLAIINLCNSTVVA) form a helical membrane-spanning segment. Residues 79-97 (PKMLVNFLVTKKTISYYGC) lie on the Extracellular side of the membrane. Cysteines 97 and 179 form a disulfide. The chain crosses the membrane as a helical span at residues 98-118 (AAQLGGFLVFIVAEIFTLAAM). Residues 119-143 (AYDRYVAIWSPLLYAVVVSPKVCRL) are Cytoplasmic-facing. The helical transmembrane segment at 144-164 (LVSLTYLQSLITALTVSSCVF) threads the bilayer. Residues 165–205 (SVSYCSSNIINHFYCDDVPLLALSCSDTYIPETAVFIFSGT) lie on the Extracellular side of the membrane. Residues 206–226 (NLLFSMIVVLISYFNIVITIL) traverse the membrane as a helical segment. Topologically, residues 227-239 (RIRSSEGRQKAFS) are cytoplasmic. The chain crosses the membrane as a helical span at residues 240 to 260 (TCASHMIAVVVFYGTLLFMYL). The Extracellular portion of the chain corresponds to 261–271 (QPRSNHSLDTD). Asparagine 265 is a glycosylation site (N-linked (GlcNAc...) asparagine). The chain crosses the membrane as a helical span at residues 272–292 (KMASVFYTLVIPVLNPLIYSL). Residues 293–315 (RNKNVKDALKRFLDNPCRSLKLM) lie on the Cytoplasmic side of the membrane.

Belongs to the G-protein coupled receptor 1 family.

The protein resides in the membrane. In terms of biological role, odorant receptor. The protein is Olfactory receptor 8J2 (OR8J2) of Homo sapiens (Human).